Reading from the N-terminus, the 660-residue chain is Transcription activator of gluconeogenesis CHGG_09150 (660 aa).

The segment covering 1 to 12 (MSDSENEYDETD) has biased composition (acidic residues). The tract at residues 1-52 (MSDSENEYDETDQLVKEEDEKMSDQRLTSEGADTSAEPKKKYDPKDPLRPRR) is disordered. Basic and acidic residues-rich tracts occupy residues 13–24 (QLVKEEDEKMSD) and 36–49 (AEPKKKYDPKDPLR). The zn(2)-C6 fungal-type DNA-binding region spans 59 to 87 (CFACQRAHLTCGDERPCQRCIKRNLMESC). 3 disordered regions span residues 98–144 (LHDA…TFFS), 170–191 (FANQQSPTSPSFQTSGNPQISG), and 319–368 (PTSI…RQSN). Residues 129–144 (SIQTSEASSNQGTFFS) show a composition bias toward polar residues. Residues 173–184 (QQSPTSPSFQTS) show a composition bias toward low complexity. 2 stretches are compositionally biased toward polar residues: residues 320–332 (TSIQSPSTDTNSP) and 344–368 (TMATFSTTPGSKPANQQRPSTRQSN). The 72-residue stretch at 455-526 (SLLEYEEFMH…NSKARVGLAT (72 aa)) folds into the PAS domain. The interval 587-613 (APDKDDGTGESSTDGQLPQKDPRNSIL) is disordered.

This sequence belongs to the ERT1/acuK family.

Its subcellular location is the nucleus. Transcription factor which regulates nonfermentable carbon utilization. Activator of gluconeogenetic genes. The sequence is that of Transcription activator of gluconeogenesis CHGG_09150 from Chaetomium globosum (strain ATCC 6205 / CBS 148.51 / DSM 1962 / NBRC 6347 / NRRL 1970) (Soil fungus).